Consider the following 395-residue polypeptide: Carbamoyl phosphate synthase small chain (395 aa).

The segment at 1–192 (MTYNLHPAIL…LQYKTDKMYG (192 aa)) is CPSase. Residues serine 50, glycine 244, and glycine 246 each contribute to the L-glutamine site. The region spanning 196 to 383 (KIILIDFGVK…INLIKHFKQY (188 aa)) is the Glutamine amidotransferase type-1 domain. The active-site Nucleophile is the cysteine 273. Residues methionine 274, glutamine 277, asparagine 313, glycine 315, and phenylalanine 316 each contribute to the L-glutamine site. Catalysis depends on residues histidine 356 and glutamate 358.

This sequence belongs to the CarA family. Composed of two chains; the small (or glutamine) chain promotes the hydrolysis of glutamine to ammonia, which is used by the large (or ammonia) chain to synthesize carbamoyl phosphate. Tetramer of heterodimers (alpha,beta)4.

The protein localises to the plastid. The protein resides in the chloroplast. It carries out the reaction hydrogencarbonate + L-glutamine + 2 ATP + H2O = carbamoyl phosphate + L-glutamate + 2 ADP + phosphate + 2 H(+). It catalyses the reaction L-glutamine + H2O = L-glutamate + NH4(+). It functions in the pathway amino-acid biosynthesis; L-arginine biosynthesis; carbamoyl phosphate from bicarbonate: step 1/1. It participates in pyrimidine metabolism; UMP biosynthesis via de novo pathway; (S)-dihydroorotate from bicarbonate: step 1/3. Its function is as follows. Small subunit of the glutamine-dependent carbamoyl phosphate synthetase (CPSase). CPSase catalyzes the formation of carbamoyl phosphate from the ammonia moiety of glutamine, carbonate, and phosphate donated by ATP, constituting the first step of 2 biosynthetic pathways, one leading to arginine and/or urea and the other to pyrimidine nucleotides. The small subunit (glutamine amidotransferase) binds and cleaves glutamine to supply the large subunit with the substrate ammonia. This Gracilaria tenuistipitata var. liui (Red alga) protein is Carbamoyl phosphate synthase small chain.